The sequence spans 930 residues: Protein translocase subunit SecA (930 aa).

Residues Q83, 101 to 105 (GEGKT), and D491 contribute to the ATP site.

It belongs to the SecA family. As to quaternary structure, monomer and homodimer. Part of the essential Sec protein translocation apparatus which comprises SecA, SecYEG and auxiliary proteins SecDF. Other proteins may also be involved.

The protein resides in the cell inner membrane. It is found in the cellular thylakoid membrane. The protein localises to the cytoplasm. The enzyme catalyses ATP + H2O + cellular proteinSide 1 = ADP + phosphate + cellular proteinSide 2.. Functionally, part of the Sec protein translocase complex. Interacts with the SecYEG preprotein conducting channel. Has a central role in coupling the hydrolysis of ATP to the transfer of proteins into and across the cell membrane, serving as an ATP-driven molecular motor driving the stepwise translocation of polypeptide chains across the membrane. Its function is as follows. Probably participates in protein translocation into and across both the cytoplasmic and thylakoid membranes in cyanobacterial cells. This Nostoc sp. (strain PCC 7120 / SAG 25.82 / UTEX 2576) protein is Protein translocase subunit SecA.